The primary structure comprises 303 residues: Glutamyl-Q tRNA(Asp) synthetase (303 aa).

Residues 9–13 and E45 each bind L-glutamate; that span reads RFAPS. The short motif at 12–22 is the 'HIGH' region element; that stretch reads PSPTGAMHLGN. 4 residues coordinate Zn(2+): C100, C102, Y125, and C129. Residues Y184 and R202 each coordinate L-glutamate. A 'KMSKS' region motif is present at residues 240-244; it reads RLAKR. K243 is an ATP binding site.

It belongs to the class-I aminoacyl-tRNA synthetase family. GluQ subfamily. Requires Zn(2+) as cofactor.

Its function is as follows. Catalyzes the tRNA-independent activation of glutamate in presence of ATP and the subsequent transfer of glutamate onto a tRNA(Asp). Glutamate is transferred on the 2-amino-5-(4,5-dihydroxy-2-cyclopenten-1-yl) moiety of the queuosine in the wobble position of the QUC anticodon. The polypeptide is Glutamyl-Q tRNA(Asp) synthetase (Deinococcus geothermalis (strain DSM 11300 / CIP 105573 / AG-3a)).